The sequence spans 89 residues: Small ribosomal subunit protein bS20 (89 aa).

The disordered stretch occupies residues 1–27 (MANIKSAKKDSIISEERRKKNASQRSK). Basic and acidic residues predominate over residues 7–18 (AKKDSIISEERR).

This sequence belongs to the bacterial ribosomal protein bS20 family.

In terms of biological role, binds directly to 16S ribosomal RNA. This is Small ribosomal subunit protein bS20 from Buchnera aphidicola subsp. Schizaphis graminum (strain Sg).